Reading from the N-terminus, the 570-residue chain is Coiled-coil domain-containing protein 22 homolog (570 aa).

Disordered stretches follow at residues 110-129 (RQSEDDANRTSHPLSSREQL) and 234-280 (LTST…PLEL). Positions 248–257 (TSPTQTSTTA) are enriched in polar residues. Positions 265 to 276 (SSEATATSTTTT) are enriched in low complexity. Coiled coils occupy residues 308–471 (ELKI…LQRQ) and 529–570 (GEKL…ITVG).

Belongs to the CCDC22 family.

This Drosophila willistoni (Fruit fly) protein is Coiled-coil domain-containing protein 22 homolog.